Consider the following 138-residue polypeptide: Putative protein encoded by LINC02912 (138 aa).

A run of 2 helical transmembrane segments spans residues 32-52 (FALS…CLIC) and 65-85 (CLIN…TISQ). Positions 109–138 (SGGQSQHSWPCPERSKNLPQVSKQLRNRAG) are disordered.

It localises to the membrane. In Homo sapiens (Human), this protein is Putative protein encoded by LINC02912.